A 73-amino-acid chain; its full sequence is Beta-defensin 108B (73 aa).

The first 22 residues, methionine 1–glycine 22, serve as a signal peptide directing secretion. Cystine bridges form between cysteine 28–cysteine 55, cysteine 35–cysteine 49, and cysteine 39–cysteine 56.

This sequence belongs to the beta-defensin family. As to expression, specifically expressed in testis. Low expression is detected also in liver.

Its subcellular location is the secreted. Functionally, has antibacterial activity. The protein is Beta-defensin 108B (DEFB108B) of Homo sapiens (Human).